A 222-amino-acid chain; its full sequence is Glutathione S-transferase A1 (222 aa).

Met1 carries the post-translational modification N-acetylmethionine. At Ala2 the chain carries N-acetylalanine; in Glutathione S-transferase A1, N-terminally processed. A GST N-terminal domain is found at 3-83 (EKPKLHYFNA…YIASKYNLYG (81 aa)). At Lys4 the chain carries N6-succinyllysine. Residues Tyr9, Arg45, 54–55 (QV), and 67–68 (QT) each bind glutathione. One can recognise a GST C-terminal domain in the interval 85–207 (DIKERALIDM…LQPGSPRKPP (123 aa)).

It belongs to the GST superfamily. Alpha family. Homodimer or heterodimer of GSTA1 and GSTA2. Liver.

The protein resides in the cytoplasm. It carries out the reaction RX + glutathione = an S-substituted glutathione + a halide anion + H(+). The catalysed reaction is prostaglandin A2 + glutathione = prostaglandin A2-S-(R)-glutathione. The enzyme catalyses prostaglandin J2 + glutathione = prostaglandin J2-S-(R)-glutathione. It catalyses the reaction (13S)-hydroperoxy-(9Z,11E)-octadecadienoate + 2 glutathione = (13S)-hydroxy-(9Z,11E)-octadecadienoate + glutathione disulfide + H2O. It carries out the reaction androst-5-ene-3,17-dione = androst-4-ene-3,17-dione. The isomerase activity is inhibited by S-methylglutathione (GSMe). Functionally, glutathione S-transferase that catalyzes the nucleophilic attack of the sulfur atom of glutathione on the electrophilic groups of a wide range of exogenous and endogenous compounds. Involved in the formation of glutathione conjugates of both prostaglandin A2 (PGA2) and prostaglandin J2 (PGJ2). It also catalyzes the isomerization of D5-androstene-3,17-dione (AD) into D4-androstene-3,17-dione and may therefore play an important role in hormone biosynthesis. Through its glutathione-dependent peroxidase activity toward the fatty acid hydroperoxide (13S)-hydroperoxy-(9Z,11E)-octadecadienoate/13-HPODE it is also involved in the metabolism of oxidized linoleic acid. The sequence is that of Glutathione S-transferase A1 (GSTA1) from Homo sapiens (Human).